Reading from the N-terminus, the 157-residue chain is Transcriptional repressor NrdR (157 aa).

Residues 3 to 34 (CPFCGHAESQVKDSRPSEDGAAIRRRRMCPEC) fold into a zinc finger. In terms of domain architecture, ATP-cone spans 49 to 139 (LIIVKRSGRR…VYRDFKETSD (91 aa)).

Belongs to the NrdR family. Zn(2+) is required as a cofactor.

In terms of biological role, negatively regulates transcription of bacterial ribonucleotide reductase nrd genes and operons by binding to NrdR-boxes. The chain is Transcriptional repressor NrdR from Caulobacter vibrioides (strain ATCC 19089 / CIP 103742 / CB 15) (Caulobacter crescentus).